Consider the following 213-residue polypeptide: Thymidylate kinase (213 aa).

10–17 contributes to the ATP binding site; it reads GLEGAGKT.

It belongs to the thymidylate kinase family.

It catalyses the reaction dTMP + ATP = dTDP + ADP. Functionally, phosphorylation of dTMP to form dTDP in both de novo and salvage pathways of dTTP synthesis. The sequence is that of Thymidylate kinase from Escherichia coli O157:H7 (strain EC4115 / EHEC).